The primary structure comprises 780 residues: Ino eighty subunit 1 (780 aa).

2 disordered regions span residues 1–25 (MADVESAGVDDSFAQSEPHDEQQIH) and 563–780 (ANGP…PGWN). A compositionally biased stretch (basic and acidic residues) spans 563 to 584 (ANGPRRDRKKEREERQKAREEA). A compositionally biased stretch (basic residues) spans 600–613 (SRARAQRNAKRKLA). Residues 614-635 (RAAAAASSTPSASTPKTAAARS) are compositionally biased toward low complexity. Acidic residues-rich tracts occupy residues 676-686 (LEGEESLDDID) and 723-751 (DADDALSSDEEEEEAEDEELDEMDVEGDD).

As to quaternary structure, component of the chromatin-remodeling INO80 complex.

The protein resides in the nucleus. Probably involved in transcription regulation via its interaction with the INO80 complex, a chromatin-remodeling complex. In Emericella nidulans (strain FGSC A4 / ATCC 38163 / CBS 112.46 / NRRL 194 / M139) (Aspergillus nidulans), this protein is Ino eighty subunit 1.